The sequence spans 250 residues: 5'-nucleotidase SurE (250 aa).

A divalent metal cation-binding residues include Asp8, Asp9, Ser39, and Asn92.

This sequence belongs to the SurE nucleotidase family. The cofactor is a divalent metal cation.

Its subcellular location is the cytoplasm. The enzyme catalyses a ribonucleoside 5'-phosphate + H2O = a ribonucleoside + phosphate. Its function is as follows. Nucleotidase that shows phosphatase activity on nucleoside 5'-monophosphates. The polypeptide is 5'-nucleotidase SurE (Vibrio cholerae serotype O1 (strain ATCC 39315 / El Tor Inaba N16961)).